A 149-amino-acid polypeptide reads, in one-letter code: Large ribosomal subunit protein bL9 (149 aa).

This sequence belongs to the bacterial ribosomal protein bL9 family.

In terms of biological role, binds to the 23S rRNA. The sequence is that of Large ribosomal subunit protein bL9 from Fusobacterium nucleatum subsp. nucleatum (strain ATCC 25586 / DSM 15643 / BCRC 10681 / CIP 101130 / JCM 8532 / KCTC 2640 / LMG 13131 / VPI 4355).